A 465-amino-acid chain; its full sequence is Cerebellar degeneration-related protein 2-like (465 aa).

Coiled coils occupy residues 38 to 143 (LLER…EQLR) and 188 to 265 (LEQE…TYLL). The tract at residues 282-314 (APEADDPQPGRGDDLGAQDGVSSPAASPGHVVR) is disordered. Residues serine 308, serine 318, and serine 344 each carry the phosphoserine modification. Residues 350 to 377 (MSILREVDEQYHALLEKYEELLSKCRQH) are a coiled coil. Residues 382–417 (RHAGVQTSRPISRDSSWRDLRGGEEGQGEVKAGEKS) are disordered. Residues 392-405 (ISRDSSWRDLRGGE) are compositionally biased toward basic and acidic residues.

Belongs to the CDR2 family.

This chain is Cerebellar degeneration-related protein 2-like (CDR2L), found in Homo sapiens (Human).